The sequence spans 133 residues: Ribosome-binding factor A (133 aa).

The protein belongs to the RbfA family. Monomer. Binds 30S ribosomal subunits, but not 50S ribosomal subunits or 70S ribosomes.

Its subcellular location is the cytoplasm. In terms of biological role, one of several proteins that assist in the late maturation steps of the functional core of the 30S ribosomal subunit. Associates with free 30S ribosomal subunits (but not with 30S subunits that are part of 70S ribosomes or polysomes). Required for efficient processing of 16S rRNA. May interact with the 5'-terminal helix region of 16S rRNA. The polypeptide is Ribosome-binding factor A (Yersinia enterocolitica).